A 90-amino-acid chain; its full sequence is Antitoxin epsilon (90 aa).

This sequence belongs to the epsilon antitoxin family. As to quaternary structure, in the presence of the zeta toxin, forms an inactive PezA(2)PezT(2) heterotetramer.

Functionally, antitoxin component of a type II toxin-antitoxin (TA) system. Neutralizes the toxic effect of cognate zeta toxin. Part of a postsegregational killing (PSK) system involved in the killing of plasmid-free cells. Continuous synthesis of the epsilon antitoxin is required to counteract the zeta toxin. The sequence is that of Antitoxin epsilon from Streptococcus agalactiae.